The primary structure comprises 40 residues: Omega-conotoxin RsXXVIA (40 aa).

Post-translationally, contains 4 disulfide bonds. In terms of tissue distribution, expressed by the venom duct.

The protein resides in the secreted. Its function is as follows. Omega-conotoxins act at presynaptic membranes, they bind and block voltage-gated calcium channels (Cav). This toxin inhibits rat Cav2.2/CACNA1B calcium channels in a dose-dependent manner (EC(50)=2.8 uM), whose effect is partially reversed after washing. In vivo, when injected into mice, it shows both an analgesic effect in acute thermal pain at 30 and 45 minutes post-injection and an anti-nociceptive effect in a formalin chronic pain test. The protein is Omega-conotoxin RsXXVIA of Conus regularis (Regular cone).